We begin with the raw amino-acid sequence, 85 residues long: MAHKKGGGTTRNGRDSESKRLGVKVYGGQVINAGGIIIRQRGTKVHPGENVGMGKDHTLFALTDGKVAFVIKGALQRQYVTVVPA.

A disordered region spans residues 1–20; that stretch reads MAHKKGGGTTRNGRDSESKR.

The protein belongs to the bacterial ribosomal protein bL27 family.

In Herminiimonas arsenicoxydans, this protein is Large ribosomal subunit protein bL27.